We begin with the raw amino-acid sequence, 958 residues long: MPYMPSLSQLQQTDAFLRRHLGPDQGEQQAMLDALGLASREQLIEQTVPPAIRLQGELNLPPALDEQAALAKLKGYAEQNQLWTSLIGMGYHGTITPPVILRNVLENPGWYTAYTPYQPEIAQGRLEALLNYQQMIIDLTGLDLANASLLDEATAAAEAMTLARRMAKSKSNRFFVDENCHPQTLSVVQTRAEAFGFELVVGTLDDLAGHEVFGALLQYPDTHGEIRDLRPAIEQLHAQQALACVAADLLSLLLLTPPGELGADVVLGSTQRFGVPMGYGGPHAAYFASRDEFKRGMPGRIIGVSKDARGNTALRMALQTREQHIRREKANSNICTAQVLLANIAGFYAVYHGPQGLKRIAQRVHRLTAILAAGLEQKGIVRLNRHFFDTLTLEVGGAQTAIIESAEAAQINLRILGRGRLGVSLDETCDERTVEQLLAIFLGADHGLDVAALDAGELAAGIPAGLQRDSGYLEHPVFNSHHSETEMLRYLKQLENKDLALNQAMIPLGSCTMKLNATSEMIPITWAEFANLHPFVPRGQAQGYRLMIEELEAWLCAITGFDAISMQPNSGAQGEYAGLVAIRKYHESRGEGQRDICLIPSSAHGTNPASAQMVSMRVVIVECDKGGNVDLEDLKRKAAEAGDRLSCLMITYPSTHGVYEENVREICAAIHAQGGQVYMDGANLNAQVGLARPADIGADVSHMNLHKTFCIPHGGGGPGMGPIGVKAHLAPFVANHPVVELEGPQPGNGAVSAAPWGSASILPISWMYIAMMGPQLRDATEVAILGANYLANRLGGAFPVLYSGRNGRVAHECILDLRPLKAASGISEEDVAKRLMDYGFHAPTMSFPVPGTLMIEPTESESKAELDRFVEAMLSIRAEIAKVQDGEWPADNNPLVRAPHTLADVIGEWDRPYSIAEAVTPSAHARAHKYWPAVNRVDNVYGDRNLFCACVPVDAYRD.

Residue K707 is modified to N6-(pyridoxal phosphate)lysine.

It belongs to the GcvP family. As to quaternary structure, the glycine cleavage system is composed of four proteins: P, T, L and H. Requires pyridoxal 5'-phosphate as cofactor.

The catalysed reaction is N(6)-[(R)-lipoyl]-L-lysyl-[glycine-cleavage complex H protein] + glycine + H(+) = N(6)-[(R)-S(8)-aminomethyldihydrolipoyl]-L-lysyl-[glycine-cleavage complex H protein] + CO2. Its function is as follows. The glycine cleavage system catalyzes the degradation of glycine. The P protein binds the alpha-amino group of glycine through its pyridoxal phosphate cofactor; CO(2) is released and the remaining methylamine moiety is then transferred to the lipoamide cofactor of the H protein. The chain is Glycine dehydrogenase (decarboxylating) from Stutzerimonas stutzeri (strain A1501) (Pseudomonas stutzeri).